A 153-amino-acid polypeptide reads, in one-letter code: NAD(P)H-quinone oxidoreductase subunit N (153 aa).

The protein belongs to the complex I NdhN subunit family. NDH-1 can be composed of about 15 different subunits; different subcomplexes with different compositions have been identified which probably have different functions.

It localises to the cellular thylakoid membrane. It carries out the reaction a plastoquinone + NADH + (n+1) H(+)(in) = a plastoquinol + NAD(+) + n H(+)(out). The enzyme catalyses a plastoquinone + NADPH + (n+1) H(+)(in) = a plastoquinol + NADP(+) + n H(+)(out). NDH-1 shuttles electrons from an unknown electron donor, via FMN and iron-sulfur (Fe-S) centers, to quinones in the respiratory and/or the photosynthetic chain. The immediate electron acceptor for the enzyme in this species is believed to be plastoquinone. Couples the redox reaction to proton translocation, and thus conserves the redox energy in a proton gradient. Cyanobacterial NDH-1 also plays a role in inorganic carbon-concentration. The protein is NAD(P)H-quinone oxidoreductase subunit N of Synechococcus sp. (strain RCC307).